The following is a 191-amino-acid chain: Xanthine phosphoribosyltransferase (191 aa).

Leu20 and Asn27 together coordinate xanthine. 128 to 132 (ANGQA) lines the 5-phospho-alpha-D-ribose 1-diphosphate pocket. Lys156 provides a ligand contact to xanthine.

This sequence belongs to the purine/pyrimidine phosphoribosyltransferase family. Xpt subfamily. In terms of assembly, homodimer.

Its subcellular location is the cytoplasm. The enzyme catalyses XMP + diphosphate = xanthine + 5-phospho-alpha-D-ribose 1-diphosphate. Its pathway is purine metabolism; XMP biosynthesis via salvage pathway; XMP from xanthine: step 1/1. Functionally, converts the preformed base xanthine, a product of nucleic acid breakdown, to xanthosine 5'-monophosphate (XMP), so it can be reused for RNA or DNA synthesis. The sequence is that of Xanthine phosphoribosyltransferase from Acinetobacter baylyi (strain ATCC 33305 / BD413 / ADP1).